Here is a 286-residue protein sequence, read N- to C-terminus: Formamidopyrimidine-DNA glycosylase (286 aa).

P2 functions as the Schiff-base intermediate with DNA in the catalytic mechanism. Residue E3 is the Proton donor of the active site. Residue K61 is the Proton donor; for beta-elimination activity of the active site. DNA is bound by residues H96, R115, and K161. The FPG-type zinc finger occupies 247–281; the sequence is EAYGREGEPCRRCGRAMRREAFMNRSSYFCPSCQR. R271 (proton donor; for delta-elimination activity) is an active-site residue.

The protein belongs to the FPG family. As to quaternary structure, monomer. The cofactor is Zn(2+).

It catalyses the reaction Hydrolysis of DNA containing ring-opened 7-methylguanine residues, releasing 2,6-diamino-4-hydroxy-5-(N-methyl)formamidopyrimidine.. The catalysed reaction is 2'-deoxyribonucleotide-(2'-deoxyribose 5'-phosphate)-2'-deoxyribonucleotide-DNA = a 3'-end 2'-deoxyribonucleotide-(2,3-dehydro-2,3-deoxyribose 5'-phosphate)-DNA + a 5'-end 5'-phospho-2'-deoxyribonucleoside-DNA + H(+). Functionally, involved in base excision repair of DNA damaged by oxidation or by mutagenic agents. Acts as a DNA glycosylase that recognizes and removes damaged bases. Has a preference for oxidized purines, such as 7,8-dihydro-8-oxoguanine (8-oxoG). Has AP (apurinic/apyrimidinic) lyase activity and introduces nicks in the DNA strand. Cleaves the DNA backbone by beta-delta elimination to generate a single-strand break at the site of the removed base with both 3'- and 5'-phosphates. In Mycobacteroides abscessus (strain ATCC 19977 / DSM 44196 / CCUG 20993 / CIP 104536 / JCM 13569 / NCTC 13031 / TMC 1543 / L948) (Mycobacterium abscessus), this protein is Formamidopyrimidine-DNA glycosylase.